Consider the following 326-residue polypeptide: tRNA uridine(34) hydroxylase (326 aa).

A Rhodanese domain is found at 123-217 (SDPDVLLVDT…YLEEVKQEES (95 aa)). The Cysteine persulfide intermediate role is filled by Cys-177. The tract at residues 304–326 (VSQVILSRRTEKEDQRQAQNKKA) is disordered.

The protein belongs to the TrhO family.

The catalysed reaction is uridine(34) in tRNA + AH2 + O2 = 5-hydroxyuridine(34) in tRNA + A + H2O. Catalyzes oxygen-dependent 5-hydroxyuridine (ho5U) modification at position 34 in tRNAs. The chain is tRNA uridine(34) hydroxylase from Shewanella sediminis (strain HAW-EB3).